Here is an 882-residue protein sequence, read N- to C-terminus: Valine--tRNA ligase (882 aa).

The 'HIGH' region signature appears at 45-55; that stretch reads PNVTGKLHLGH. A 'KMSKS' region motif is present at residues 519–523; sequence KMSKS. K522 contributes to the ATP binding site. Positions 808 to 877 form a coiled coil; that stretch reads LADLLNVEEE…DATQERIVEM (70 aa).

This sequence belongs to the class-I aminoacyl-tRNA synthetase family. ValS type 1 subfamily. As to quaternary structure, monomer.

Its subcellular location is the cytoplasm. The enzyme catalyses tRNA(Val) + L-valine + ATP = L-valyl-tRNA(Val) + AMP + diphosphate. Catalyzes the attachment of valine to tRNA(Val). As ValRS can inadvertently accommodate and process structurally similar amino acids such as threonine, to avoid such errors, it has a 'posttransfer' editing activity that hydrolyzes mischarged Thr-tRNA(Val) in a tRNA-dependent manner. The sequence is that of Valine--tRNA ligase from Streptococcus pyogenes serotype M6 (strain ATCC BAA-946 / MGAS10394).